The following is a 187-amino-acid chain: MSQSGEENLQGSWVELHFSNGNGSSVPASVSIYNGDMEKILLDAQHESGRSSSKSSHCDSPPRSQTPQDTNRAEIDSHSFGEKNSTLSEEDYIERRREVESILKKNSDWIWDWSSRPENIPPKEFLFKHPKRTATLSMRNTSVMKKGGIFSADFLKVFLPSLLLSHLLAIGLGIYIGRRLTTSTSTF.

The tract at residues 42–86 (LDAQHESGRSSSKSSHCDSPPRSQTPQDTNRAEIDSHSFGEKNST) is disordered. 6 positions are modified to phosphoserine: Ser-48, Ser-60, Ser-77, Ser-79, Ser-85, and Ser-88. Positions 50–63 (RSSSKSSHCDSPPR) are enriched in low complexity. Positions 71 to 81 (NRAEIDSHSFG) are enriched in basic and acidic residues. The short motif at 93–118 (IERRREVESILKKNSDWIWDWSSRPE) is the BH3 element. Residues 157-177 (VFLPSLLLSHLLAIGLGIYIG) form a helical membrane-spanning segment.

It belongs to the NIP3 family. Homodimer. Binds to BCL2. Interacts with BNIP3L and ACAA2. Interacts (via BH3 domain) with SPATA18 (via coiled-coil domains). Interacts with BOK; promotes BOK oligomerization. Interacts with PPTC7; this interaction promotes BNIP3 degradation.

The protein localises to the mitochondrion. The protein resides in the mitochondrion outer membrane. Functionally, apoptosis-inducing protein that can overcome BCL2 suppression. May play a role in repartitioning calcium between the two major intracellular calcium stores in association with BCL2. Involved in mitochondrial quality control via its interaction with SPATA18/MIEAP: in response to mitochondrial damage, participates in mitochondrial protein catabolic process (also named MALM) leading to the degradation of damaged proteins inside mitochondria. The physical interaction of SPATA18/MIEAP, BNIP3 and BNIP3L/NIX at the mitochondrial outer membrane may play a critical role in the translocation of lysosomal proteins from the cytoplasm to the mitochondrial matrix. The physical interaction of SPATA18/MIEAP, BNIP3 and BNIP3L/NIX at the mitochondrial outer membrane regulates the opening of a pore in the mitochondrial double membrane in order to mediate the translocation of lysosomal proteins from the cytoplasm to the mitochondrial matrix. Plays an important role in the calprotectin (S100A8/A9)-induced cell death pathway. This chain is BCL2/adenovirus E1B 19 kDa protein-interacting protein 3, found in Mus musculus (Mouse).